The chain runs to 187 residues: dCTP deaminase (187 aa).

DCTP-binding positions include 110–115, 134–136, Q155, Y169, and Q179; these read KSTYAR and TLE. E136 (proton donor/acceptor) is an active-site residue.

This sequence belongs to the dCTP deaminase family. In terms of assembly, homotrimer.

The enzyme catalyses dCTP + H2O + H(+) = dUTP + NH4(+). The protein operates within pyrimidine metabolism; dUMP biosynthesis; dUMP from dCTP (dUTP route): step 1/2. Functionally, catalyzes the deamination of dCTP to dUTP. The protein is dCTP deaminase of Bordetella bronchiseptica (strain ATCC BAA-588 / NCTC 13252 / RB50) (Alcaligenes bronchisepticus).